The following is a 554-amino-acid chain: Exodeoxyribonuclease 7 large subunit (554 aa).

It belongs to the XseA family. In terms of assembly, heterooligomer composed of large and small subunits.

Its subcellular location is the cytoplasm. The catalysed reaction is Exonucleolytic cleavage in either 5'- to 3'- or 3'- to 5'-direction to yield nucleoside 5'-phosphates.. In terms of biological role, bidirectionally degrades single-stranded DNA into large acid-insoluble oligonucleotides, which are then degraded further into small acid-soluble oligonucleotides. The sequence is that of Exodeoxyribonuclease 7 large subunit from Chlamydia pneumoniae (Chlamydophila pneumoniae).